We begin with the raw amino-acid sequence, 550 residues long: PAB1-binding protein 1 (550 aa).

The Sm domain occupies 11–95 (RLEYLYLNLV…IVMIEVQNAK (85 aa)). Disordered stretches follow at residues 201-296 (HDDE…HKRM) and 441-550 (GMGN…RVGK). The segment covering 214–223 (DVHRPQEKKP) has biased composition (basic and acidic residues). Positions 244 to 262 (AAAAPATAPTTAPAAAPAP) are enriched in low complexity. Residues 263–281 (AAAPPAAAPAAAAPPPPPA) show a composition bias toward pro residues.

It belongs to the ataxin-2 family. As to quaternary structure, forms a complex composed of at least MKT1, PBP1, XAC1 and LSM12. Forms a complex composed of at least MKT1L, PBP1, XAC1 and LSM12. Within the complex, interacts with MKT1 (via C-terminus); the interaction is direct. Interacts (via C-terminus) with ZC3H11; the interaction is direct.

The protein localises to the cytoplasm. The protein resides in the cytosol. It is found in the stress granule. In terms of biological role, involved in post-transcriptional regulation of gene expression. Promotes mRNA stabilization by bridging poly(A)-binding protein to mRNAs. This Trypanosoma brucei brucei (strain 927/4 GUTat10.1) protein is PAB1-binding protein 1.